A 927-amino-acid chain; its full sequence is Phospholipase D beta 2 (927 aa).

A C2 domain is found at 104–237; it reads PFGKASLKVL…YSGARIEGTY (134 aa). Residue aspartate 299 participates in Ca(2+) binding. The region spanning 439-474 is the PLD phosphodiesterase 1 domain; sequence TIYTHHQKNLIVDADAGGNRRKIVAFVGGLDLCDGR. Residues histidine 444, lysine 446, and aspartate 451 contribute to the active site. Histidine 444 lines the a 1,2-diacyl-sn-glycero-3-phosphate pocket. Positions 480 and 512 each coordinate Ca(2+). The a 1,2-diacyl-sn-glycero-3-phosphate site is built by glutamine 640 and histidine 778. Positions 773–800 constitute a PLD phosphodiesterase 2 domain; the sequence is FMIYVHSKGMVVDDEYVVIGSANINQRS. Residues histidine 778, lysine 780, and aspartate 785 contribute to the active site. Residue glutamate 841 participates in Ca(2+) binding.

Belongs to the phospholipase D family. C2-PLD subfamily. Ca(2+) is required as a cofactor. In terms of tissue distribution, expressed in stems, and to a lower amount in leaves, flowers and siliques.

It localises to the cytoplasm. Its subcellular location is the membrane. The catalysed reaction is a 1,2-diacyl-sn-glycero-3-phosphocholine + H2O = a 1,2-diacyl-sn-glycero-3-phosphate + choline + H(+). Inhibited by neomycin. Its function is as follows. Hydrolyzes glycerol-phospholipids at the terminal phosphodiesteric bond to generate phosphatidic acids (PA). Plays an important role in various cellular processes, including phytohormone action, vesicular trafficking, secretion, cytoskeletal arrangement, meiosis, tumor promotion, pathogenesis, membrane deterioration and senescence. Can use phosphatidylserine or N-acylphosphatidylethanolamine as substrates. The chain is Phospholipase D beta 2 from Arabidopsis thaliana (Mouse-ear cress).